Reading from the N-terminus, the 180-residue chain is MSILPVIFLPIFFYSPFVQTFNVPECIDKGQYFASFMELENEPVILPCPQINTLSSGYNILDILWEKRGADNDRIIQIDNGSNMLILNPTQSDSGIYIYITTNETYCDMMSLNLTIVSVSESNIDLISYPQIVNERSTGKMVCPNINAFISSNVNTELYGADIDALEIRDLNNGHLELLP.

An N-terminal signal peptide occupies residues 1 to 20; the sequence is MSILPVIFLPIFFYSPFVQT. Residues asparagine 80, asparagine 103, and asparagine 113 are each glycosylated (N-linked (GlcNAc...) asparagine; by host).

Belongs to the interleukin-1 receptor family. Interacts with mouse Il1b.

The protein localises to the secreted. Its function is as follows. May reduce the host inflammatory response by interacting with inteleukin-1 beta (Il1b) and thus decreasing the association between IL1B and its cellular receptor. This is Interleukin-1-binding protein (OPG201) from Monkeypox virus.